A 263-amino-acid polypeptide reads, in one-letter code: Small ribosomal subunit protein eS4, Y isoform 1 (263 aa).

Positions 42–104 constitute an S4 RNA-binding domain; the sequence is LPLIIFLRNR…TGEHFRLVYD (63 aa).

The protein belongs to the eukaryotic ribosomal protein eS4 family.

The chain is Small ribosomal subunit protein eS4, Y isoform 1 (RPS4Y1) from Macaca fuscata fuscata (Japanese macaque).